A 159-amino-acid chain; its full sequence is Neuroglobin (159 aa).

The Globin domain occupies 3–151 (KLSEKDKELI…VVAAMSQGWA (149 aa)). The heme b site is built by His66 and His98.

The protein belongs to the globin family. As to quaternary structure, monomer. Homodimers and homotetramers. Mainly monomeric but also detected as part of homodimers and homotetramers.

It is found in the cytoplasm. Its subcellular location is the cytosol. It localises to the mitochondrion matrix. The enzyme catalyses Fe(III)-heme b-[protein] + nitric oxide + H2O = Fe(II)-heme b-[protein] + nitrite + 2 H(+). Its function is as follows. Monomeric globin with a bis-histidyl six-coordinate heme-iron atom through which it can bind dioxygen, carbon monoxide and nitric oxide. Could help transport oxygen and increase its availability to the metabolically active neuronal tissues, though its low quantity in tissues as well as its high affinity for dioxygen, which may limit its oxygen-releasing ability, argue against it. The ferrous/deoxygenated form exhibits a nitrite reductase activity and it could produce nitric oxide which in turn inhibits cellular respiration in response to hypoxia. In its ferrous/deoxygenated state, it may also exhibit GDI (Guanine nucleotide Dissociation Inhibitor) activity toward heterotrimeric G-alpha proteins, thereby regulating signal transduction to facilitate neuroprotective responses in the wake of hypoxia and associated oxidative stress. The protein is Neuroglobin (ngb) of Dissostichus mawsoni (Antarctic cod).